A 261-amino-acid polypeptide reads, in one-letter code: MELQLTGKESGWWIVSHENKLWLPKGELPQGNAANWSLQGATARQIGEWQGQAVWLIRQMMSTDMGSVRQLLDVDRGLFQLAGRGVQLAEFYRSHRYCGYCGHQMHASRTEWACLCNHCRERYYPQIAPCVIVAIRRGDEILLAQHVRHRGGINTVLAGFVEVGETLEQAVSREVLEESNIHIKNLRYVTSQPWPFPHSLMMAFMAEYDSGELRHDPKELLNAGWYRYDQLPLLPPPGTVARRLIEDTVVLCREEQFDDGE.

Substrate is bound by residues Lys-25 and Arg-69. Zn(2+)-binding residues include Cys-98 and Cys-101. Glu-111 contacts substrate. 2 residues coordinate Zn(2+): Cys-116 and Cys-119. Position 124 (Tyr-124) interacts with substrate. In terms of domain architecture, Nudix hydrolase spans 125-248; sequence PQIAPCVIVA…TVARRLIEDT (124 aa). The a divalent metal cation site is built by Ala-158, Glu-174, and Glu-178. Positions 159-180 match the Nudix box motif; sequence GFVEVGETLEQAVSREVLEESN. Residue 192–199 participates in substrate binding; sequence QPWPFPHS. Glu-219 is a binding site for a divalent metal cation. A substrate-binding site is contributed by Ala-241.

Belongs to the Nudix hydrolase family. NudC subfamily. As to quaternary structure, homodimer. The cofactor is Mg(2+). Requires Mn(2+) as cofactor. Zn(2+) is required as a cofactor.

It catalyses the reaction a 5'-end NAD(+)-phospho-ribonucleoside in mRNA + H2O = a 5'-end phospho-adenosine-phospho-ribonucleoside in mRNA + beta-nicotinamide D-ribonucleotide + 2 H(+). The enzyme catalyses NAD(+) + H2O = beta-nicotinamide D-ribonucleotide + AMP + 2 H(+). It carries out the reaction NADH + H2O = reduced beta-nicotinamide D-ribonucleotide + AMP + 2 H(+). Functionally, mRNA decapping enzyme that specifically removes the nicotinamide adenine dinucleotide (NAD) cap from a subset of mRNAs by hydrolyzing the diphosphate linkage to produce nicotinamide mononucleotide (NMN) and 5' monophosphate mRNA. The NAD-cap is present at the 5'-end of some mRNAs and stabilizes RNA against 5'-processing. Has preference for mRNAs with a 5'-end purine. Catalyzes the hydrolysis of a broad range of dinucleotide pyrophosphates. This chain is NAD-capped RNA hydrolase NudC, found in Yersinia enterocolitica serotype O:8 / biotype 1B (strain NCTC 13174 / 8081).